The following is a 365-amino-acid chain: Protein-glutamate methylesterase/protein-glutamine glutaminase (365 aa).

A Response regulatory domain is found at 5–122 (KVLIVDDSAF…SLDIRKIGEK (118 aa)). D56 is subject to 4-aspartylphosphate. Basic and acidic residues predominate over residues 146–155 (IKKEKQDESS). Residues 146 to 167 (IKKEKQDESSTPKPQVEKTSGL) form a disordered region. Residues 156 to 167 (TPKPQVEKTSGL) show a composition bias toward polar residues. A CheB-type methylesterase domain is found at 177–363 (ILIGSSTGGP…LEIIKFAKKI (187 aa)). Residues S182, H208, and D305 contribute to the active site.

Belongs to the CheB family. In terms of processing, phosphorylated by CheA. Phosphorylation of the N-terminal regulatory domain activates the methylesterase activity.

It is found in the cytoplasm. It catalyses the reaction [protein]-L-glutamate 5-O-methyl ester + H2O = L-glutamyl-[protein] + methanol + H(+). It carries out the reaction L-glutaminyl-[protein] + H2O = L-glutamyl-[protein] + NH4(+). Functionally, involved in chemotaxis. Part of a chemotaxis signal transduction system that modulates chemotaxis in response to various stimuli. Catalyzes the demethylation of specific methylglutamate residues introduced into the chemoreceptors (methyl-accepting chemotaxis proteins or MCP) by CheR. Also mediates the irreversible deamidation of specific glutamine residues to glutamic acid. The polypeptide is Protein-glutamate methylesterase/protein-glutamine glutaminase (Methanococcus maripaludis (strain DSM 14266 / JCM 13030 / NBRC 101832 / S2 / LL)).